We begin with the raw amino-acid sequence, 354 residues long: 4-hydroxy-3-methylbut-2-en-1-yl diphosphate synthase (flavodoxin) (354 aa).

Positions 265, 268, 300, and 307 each coordinate [4Fe-4S] cluster.

Belongs to the IspG family. Requires [4Fe-4S] cluster as cofactor.

The catalysed reaction is (2E)-4-hydroxy-3-methylbut-2-enyl diphosphate + oxidized [flavodoxin] + H2O + 2 H(+) = 2-C-methyl-D-erythritol 2,4-cyclic diphosphate + reduced [flavodoxin]. Its pathway is isoprenoid biosynthesis; isopentenyl diphosphate biosynthesis via DXP pathway; isopentenyl diphosphate from 1-deoxy-D-xylulose 5-phosphate: step 5/6. Functionally, converts 2C-methyl-D-erythritol 2,4-cyclodiphosphate (ME-2,4cPP) into 1-hydroxy-2-methyl-2-(E)-butenyl 4-diphosphate. The chain is 4-hydroxy-3-methylbut-2-en-1-yl diphosphate synthase (flavodoxin) from Hydrogenobaculum sp. (strain Y04AAS1).